A 492-amino-acid chain; its full sequence is N-succinylglutamate 5-semialdehyde dehydrogenase (492 aa).

220–225 serves as a coordination point for NAD(+); it reads GSASTG. Active-site residues include Glu243 and Cys277.

It belongs to the aldehyde dehydrogenase family. AstD subfamily.

It catalyses the reaction N-succinyl-L-glutamate 5-semialdehyde + NAD(+) + H2O = N-succinyl-L-glutamate + NADH + 2 H(+). It participates in amino-acid degradation; L-arginine degradation via AST pathway; L-glutamate and succinate from L-arginine: step 4/5. In terms of biological role, catalyzes the NAD-dependent reduction of succinylglutamate semialdehyde into succinylglutamate. In Salmonella paratyphi A (strain AKU_12601), this protein is N-succinylglutamate 5-semialdehyde dehydrogenase.